The chain runs to 234 residues: Orotidine 5'-phosphate decarboxylase (234 aa).

Substrate contacts are provided by residues aspartate 10, lysine 31, 58–67, threonine 121, arginine 183, glutamine 192, glycine 212, and arginine 213; that span reads DLKLHDIPNT. Lysine 60 acts as the Proton donor in catalysis.

The protein belongs to the OMP decarboxylase family. Type 1 subfamily. As to quaternary structure, homodimer.

The catalysed reaction is orotidine 5'-phosphate + H(+) = UMP + CO2. It functions in the pathway pyrimidine metabolism; UMP biosynthesis via de novo pathway; UMP from orotate: step 2/2. Its function is as follows. Catalyzes the decarboxylation of orotidine 5'-monophosphate (OMP) to uridine 5'-monophosphate (UMP). The polypeptide is Orotidine 5'-phosphate decarboxylase (Halalkalibacterium halodurans (strain ATCC BAA-125 / DSM 18197 / FERM 7344 / JCM 9153 / C-125) (Bacillus halodurans)).